The chain runs to 149 residues: Large-conductance mechanosensitive channel (149 aa).

3 helical membrane-spanning segments follow: residues 10 to 30, 41 to 61, and 87 to 107; these read FALK…GAFA, IMPI…MFLI, and GSFI…FMMV.

Belongs to the MscL family. In terms of assembly, homopentamer.

The protein resides in the cell inner membrane. In terms of biological role, channel that opens in response to stretch forces in the membrane lipid bilayer. May participate in the regulation of osmotic pressure changes within the cell. The sequence is that of Large-conductance mechanosensitive channel from Psychrobacter cryohalolentis (strain ATCC BAA-1226 / DSM 17306 / VKM B-2378 / K5).